The primary structure comprises 157 residues: MLCPHCHQNSSRVIDSRPTDEGRVIRRRRECENCQFRFTTFERVEQTPLLVIKKNGTREEFNRDKLLRGLIRAAEKRPVTMEQMTEIVDEVENKIRALGENEVSSQAVGEYVMAVLPGVDEIAYIRFASVYRQFKDMNVFMAELQEMMKKEKARDQD.

A zinc finger spans residues 3-34 (CPHCHQNSSRVIDSRPTDEGRVIRRRRECENC). The ATP-cone domain occupies 49 to 139 (LLVIKKNGTR…VYRQFKDMNV (91 aa)).

The protein belongs to the NrdR family. Requires Zn(2+) as cofactor.

Its function is as follows. Negatively regulates transcription of bacterial ribonucleotide reductase nrd genes and operons by binding to NrdR-boxes. The protein is Transcriptional repressor NrdR of Latilactobacillus sakei subsp. sakei (strain 23K) (Lactobacillus sakei subsp. sakei).